A 127-amino-acid chain; its full sequence is UPF0325 protein VS_2356 (127 aa).

This sequence belongs to the UPF0325 family.

This Vibrio atlanticus (strain LGP32) (Vibrio splendidus (strain Mel32)) protein is UPF0325 protein VS_2356.